A 385-amino-acid polypeptide reads, in one-letter code: Selenoprotein P (385 aa).

Positions methionine 1 to alanine 19 are cleaved as a signal peptide. Residue selenocysteine 59 is a non-standard amino acid, selenocysteine. The cysteinyl-selenocysteine (Sec-Cys); in isoform Se-P1 cross-link spans selenocysteine 59–cysteine 62. N-linked (GlcNAc...) asparagine glycosylation is found at asparagine 83, asparagine 174, and asparagine 188. 2 disulfides stabilise this stretch: cysteine 168/cysteine 186 and cysteine 172/cysteine 175. The disordered stretch occupies residues lysine 196–glutamate 262. Over residues leucine 243–glutamine 258 the composition is skewed to basic residues. Residue selenocysteine 264 is a non-standard amino acid, selenocysteine. Serine 269 carries the post-translational modification Phosphoserine. Non-standard amino acids (selenocysteine) are located at selenocysteine 282, selenocysteine 323, selenocysteine 335, and selenocysteine 357. The segment at selenocysteine 357 to asparagine 385 is disordered. The span at glutamine 360–proline 369 shows a compositional bias: polar residues. O-linked (Hex...) threonine; partial glycosylation is present at threonine 365. Non-standard amino acids (selenocysteine) are located at selenocysteine 371, selenocysteine 373, selenocysteine 380, and selenocysteine 382. Residues lysine 376–asparagine 385 are compositionally biased toward basic residues.

This sequence belongs to the selenoprotein P family. Isoform Se-P1 contains several disulfide bridges and a selenide-sulfide bond between Sec-59 and Cys-62. These bonds are speculated to serve as redox-active pairs. In terms of processing, phosphorylation sites are present in the extracellular medium. In terms of tissue distribution, widely expressed, mainly by the liver. Secreted in plasma.

It localises to the secreted. Its function is as follows. Might be responsible for some of the extracellular antioxidant defense properties of selenium or might be involved in the transport of selenium. May supply selenium to tissues such as brain and testis. The sequence is that of Selenoprotein P from Rattus norvegicus (Rat).